The following is a 245-amino-acid chain: Small ribosomal subunit protein uS2 (245 aa).

Belongs to the universal ribosomal protein uS2 family.

This chain is Small ribosomal subunit protein uS2, found in Pseudomonas putida (strain W619).